The primary structure comprises 479 residues: ATP synthase subunit beta (479 aa).

An ATP-binding site is contributed by 153 to 160 (GGAGVGKT).

Belongs to the ATPase alpha/beta chains family. In terms of assembly, F-type ATPases have 2 components, CF(1) - the catalytic core - and CF(0) - the membrane proton channel. CF(1) has five subunits: alpha(3), beta(3), gamma(1), delta(1), epsilon(1). CF(0) has three main subunits: a(1), b(2) and c(9-12). The alpha and beta chains form an alternating ring which encloses part of the gamma chain. CF(1) is attached to CF(0) by a central stalk formed by the gamma and epsilon chains, while a peripheral stalk is formed by the delta and b chains.

The protein resides in the cell membrane. It carries out the reaction ATP + H2O + 4 H(+)(in) = ADP + phosphate + 5 H(+)(out). In terms of biological role, produces ATP from ADP in the presence of a proton gradient across the membrane. The catalytic sites are hosted primarily by the beta subunits. This Lactobacillus helveticus (strain DPC 4571) protein is ATP synthase subunit beta.